The primary structure comprises 847 residues: Beta-galactosidase 1 (847 aa).

Residues 1 to 32 form the signal peptide; it reads MGSKPNAMKNVVAMAAVSALFLLGFLVCSVSG. Glutamate 190 acts as the Proton donor in catalysis. Glutamate 259 (nucleophile) is an active-site residue. Asparagine 469 is a glycosylation site (N-linked (GlcNAc...) asparagine). The 87-residue stretch at 761-847 folds into the SUEL-type lectin domain; the sequence is KPLHPKAHLQ…KKLAVEAVCA (87 aa).

This sequence belongs to the glycosyl hydrolase 35 family. Ubiquitous, at low levels.

It localises to the secreted. The protein localises to the extracellular space. Its subcellular location is the apoplast. The catalysed reaction is Hydrolysis of terminal non-reducing beta-D-galactose residues in beta-D-galactosides.. The protein is Beta-galactosidase 1 (BGAL1) of Arabidopsis thaliana (Mouse-ear cress).